A 157-amino-acid polypeptide reads, in one-letter code: Large ribosomal subunit protein uL15 (157 aa).

A compositionally biased stretch (basic and acidic residues) spans 1-13 (MKLNDLRDKDGAT). Residues 1-39 (MKLNDLRDKDGATHSKKRLGRGIGSGSGKTAGRGVKGQK) form a disordered region. Gly residues predominate over residues 21–35 (RGIGSGSGKTAGRGV).

It belongs to the universal ribosomal protein uL15 family. Part of the 50S ribosomal subunit.

Its function is as follows. Binds to the 23S rRNA. This chain is Large ribosomal subunit protein uL15, found in Mesorhizobium japonicum (strain LMG 29417 / CECT 9101 / MAFF 303099) (Mesorhizobium loti (strain MAFF 303099)).